A 227-amino-acid polypeptide reads, in one-letter code: MNSINIAIDGPASSGKSTVAKIIAKNLNYTYLDTGAMYRCATYLALQHGYEAQDVSKILGLLAERPISFGKAEDGSQTVFIGTEEVTLAIRQNDVTNNVSWVSAIPEIREELVNQQRRIAKDGAIIMDGRDIGTVVLPDAELKIFLVASVDERAERRFKENQEKGIESDFETLKSEIAARDYKDSHREVSPLKAAEDAIEFDTTGVSIEGVVTFIQEKAEKIIDMKN.

An ATP-binding site is contributed by 10 to 18 (GPASSGKST).

Belongs to the cytidylate kinase family. Type 1 subfamily.

It localises to the cytoplasm. It catalyses the reaction CMP + ATP = CDP + ADP. It carries out the reaction dCMP + ATP = dCDP + ADP. In Streptococcus agalactiae serotype III (strain NEM316), this protein is Cytidylate kinase.